We begin with the raw amino-acid sequence, 293 residues long: Inhibitory synaptic factor 1 (293 aa).

A disordered region spans residues 1–26 (MNIRGAPDLGQPSDDPSSGGERERIR). Residues 30 to 63 (KMVIGQLEGILRELKEVAKELREVVSQIDKLTSD) adopt a coiled-coil conformation. 2 disordered regions span residues 120–186 (TPSD…RERV) and 200–293 (DDEE…RGKN). The span at 171 to 180 (VKSQLPQRTP) shows a compositional bias: polar residues. Over residues 200 to 215 (DDEEGDGEQEVEEEEV) the composition is skewed to acidic residues. Composition is skewed to polar residues over residues 243-256 (SPLTSRHSGSTLAP) and 264-286 (RNSSTQTVSDKSTQTVLPYTATR).

This sequence belongs to the INSYN1 family. Interacts with GPHN.

The protein localises to the postsynaptic density. Functionally, component of the protein machinery at the inhibitory synapses, probably acting as a scaffold. Inhibitory synapses dampen neuronal activity through postsynaptic hyperpolarization. This synaptic inhibition is fundamental for the functioning of the central nervous system, shaping and orchestrating the flow of information through neuronal networks to generate a precise neural code. This Homo sapiens (Human) protein is Inhibitory synaptic factor 1.